We begin with the raw amino-acid sequence, 1775 residues long: MKKKFSIVIISVLLLGYLAPFDTLLVGADETTVTEDTTVKTAETETATEATESESGSDNEKAEEPKEAEASKETTEKEEKAKTKEPASNIKTEINTDKSQLKQTNLKAVVPAGSTYNSLFPDDNLAKKLAVIITGNAAATGNESVDSAALLAISQLDLSGETGNDPTDISNIEGLQYLENLTSLNLSENNISDLAPIKDLVNLVSLNLSSNRTLVNLSGVEGLVNLQELNVSANKALEDISQVAALPVLKEISAQGCNIKTLELDNPAGAILPELETFYLQENDLTDLTSLAKLPKLKNLYIKGNASLKSLATLKGATKLQLIDASNCTDLETLGDISGLSELEMIQLSGCSKLKEITSLKDLPNLVNITADSCAIEDLGTLNNLPKLQTLILSDNKDLTNINAITDMPQLKTLALDGCGITSIGTLDNLPKLEKLDLKENQLTSISEINDLPRLSYLDVSVNYLTTIGELKKLPLLEWLNVSSNRLSDVSTLTNFPSLNYINVSNNVIRTVGKMTELPSLKEFYAQNNNVSDISMIHDMPNLRKVDASNNLITNIGTFDNLPKLQNLDVHSNRITNTSVIHDLPSLETFYAQNNLITNIGTMDNLPELTYVDLSFNRIPSLAPIGDLPKLEILKVTDNYSYLRSLGTMDGVSKLRNLELQNNYLNYTGTEGNLSALSDLTNLTELNLRDNGYISDISGLSTLSRLIYLNLDSNKIKDISALSNLTTLQELTLENNQIEDISALSDLDNLNKLALSKNKIIDISPAANMVNRGASVTASNQTYTLPTVLSYQSSFTIDNPVVWYDGTPLAPSSIAHSGTYKDGEITWTNMTAASSSTEFNFNRLKDGLTFSGTITQPYKSAVKVTANAEQTYTIGDTISEEQFLKDVNAKSSDGAPVTSDFATVVDLNTFGEYEVTLTSEKDGIQGDSCKVIVKVLHGAPVISADQTINYDKHATITEKQFLEDVHASTDLNTAITTNFSTAVNLNKGGDYTVALNSENEDGVKAETVYVTVTVDKDPAPIISAKTDITYDKFSKKTEAAFLDDIDADTNDGSIITSNFATAVNLDKAGDYTVTLNSINSDGVASTPTAIIVHVEKEKIATISANTAQQYEKYAEINETQFLKDVHASINASPTTAVLESDFETVVKLDVPGTYTVTITATNEDGGVSAPKEVSVIVKKLPAPEITADKEITYPKFDEVSEAEFLSDIHATINEKNVTITSNFSADVNLNKAGDYTVTLNATNEDGVKATPVEVIVHVQQGERPVITADATISYDKFANITEAKFLEDIHATSSDGQSSTVITSNFETATNFKTAMSYTVTLNAVNEDGISAEPVAVTVTINKEPAATLKADAEVSYAKNEAVTESDFFKDVHLEGAEAPSTAKATSNFDSVVDRSKTGDYTVTINATNEDGAVSTPIEVIVHIGAESAPVITANAEVKYNKHEQTDERRFLYDSDAKIDEANVEIKTDFAEKVDINKVGTYTVTLTATNEDGQAANPVEVSVIVSDAAAEKVNVKYVDENGAEISAAETLTGNLDDAFSIDAKSIAGYKCDATLSGVFSTVEQTVVFHYKAIEPGVVTIKYEDANGKAVAEDKQITGEVGDDFEAEAQTVSGYSCRAIASGKITEEPQTITFTYTTATPSKKSGEITVQYVDESGKKLADSKKVTGDIDDSYSVEAKAIDGYSVVGDDSAKGVFTEKSQTVTFKYKKNTQVSKDEPKVKGKTNQPPSADTKLKVDNNTLPATGDTENMALAVLIGFNMLLVASIFLFRKPKTNQ.

A signal peptide spans 1–28 (MKKKFSIVIISVLLLGYLAPFDTLLVGA). Over residues 36–50 (DTTVKTAETETATEA) the composition is skewed to low complexity. The interval 36-97 (DTTVKTAETE…SNIKTEINTD (62 aa)) is disordered. Residues 58–85 (DNEKAEEPKEAEASKETTEKEEKAKTKE) show a composition bias toward basic and acidic residues. LRR repeat units follow at residues 152-176 (AISQ…EGLQ), 180-201 (NLTS…KDLV), 202-224 (NLVS…EGLV), 225-247 (NLQE…AALP), 248-269 (VLKE…NPAG), 274-295 (ELET…AKLP), 296-318 (KLKN…KGAT), 319-341 (KLQL…SGLS), 342-364 (ELEM…KDLP), 365-386 (NLVN…NNLP), 387-409 (KLQT…TDMP), 410-431 (QLKT…DNLP), 432-453 (KLEK…NDLP), 454-475 (RLSY…KKLP), 476-497 (LLEW…TNFP), 498-519 (SLNY…TELP), 520-541 (SLKE…HDMP), 542-563 (NLRK…DNLP), 564-585 (KLQN…HDLP), 586-607 (SLET…DNLP), 608-629 (ELTY…GDLP), 630-650 (KLEI…GTMD), 654-675 (KLRN…GNLS), 682-704 (NLTE…STLS), 705-726 (RLIY…SNLT), 727-748 (TLQE…SDLD), and 749-770 (NLNK…ANMV). Positions 782–869 (TYTLPTVLSY…SAVKVTANAE (88 aa)) constitute an LRRCT domain. 3 consecutive MucBP domains span residues 1507-1566 (DAAA…EQTV), 1572-1631 (AIEP…PQTI), and 1641-1702 (SKKS…SQTV). The interval 1713–1737 (SKDEPKVKGKTNQPPSADTKLKVDN) is disordered. The LPXTG sorting signal signature appears at 1740–1744 (LPATG). The residue at position 1743 (threonine 1743) is a Pentaglycyl murein peptidoglycan amidated threonine. Residues 1744–1775 (GDTENMALAVLIGFNMLLVASIFLFRKPKTNQ) constitute a propeptide, removed by sortase.

The protein belongs to the internalin family.

It is found in the secreted. It localises to the cell wall. A role in virulence could not be demonstrated. The protein is Internalin I (inlI) of Listeria monocytogenes serotype 4b (strain F2365).